We begin with the raw amino-acid sequence, 363 residues long: Ribosome-binding ATPase YchF (363 aa).

Residues 3–256 (FKCGIVGLPN…LDDEEKVEFL (254 aa)) form the OBG-type G domain. 12–17 (NVGKST) provides a ligand contact to ATP. Serine 16 and threonine 36 together coordinate Mg(2+). The TGS domain maps to 278 to 361 (NLQTYFTAGV…QDGDVMHFRF (84 aa)).

The cofactor is Mg(2+).

In terms of biological role, ATPase that binds to both the 70S ribosome and the 50S ribosomal subunit in a nucleotide-independent manner. Does not hydrolyze GTP. The protein is Ribosome-binding ATPase YchF of Haemophilus influenzae (strain ATCC 51907 / DSM 11121 / KW20 / Rd).